A 492-amino-acid polypeptide reads, in one-letter code: Probable sphingolipid transporter spinster homolog 1 (492 aa).

A helical membrane pass occupies residues 29–49; the sequence is FVTILCIINLINYVDRGVIAS. Asparagine 53 and asparagine 76 each carry an N-linked (GlcNAc...) asparagine glycan. Helical transmembrane passes span 83–103, 119–139, 141–161, 169–189, 200–220, 279–299, and 317–337; these read GLLSSAFMVGLLVASPIFAGL, VWTIAVIGCGFSYNFWMIAVF, MFVGVGEASFISLAAPYIDDS, FWLGLFYMCIPAGVALGYVFG, WAFYIEAIAMAVFVILSFCIK, VFIVNVLGYITYNFVIGAYSY, and IFGGLTIICGIIGTLGGSYVL. Asparagine 341 carries an N-linked (GlcNAc...) asparagine glycan. 4 consecutive transmembrane segments (helical) span residues 348 to 368, 372 to 392, 407 to 427, and 442 to 462; these read FKLLAASTLLGAAFCFTAFLM, YAFIALFAVGEILIFAPQAPV, LSMASSTVLIHILGDVPSSPL, and TLIITSILFLAAIIWGIGIFM. Serine 472 carries the post-translational modification Phosphoserine. The segment covering 472–481 has biased composition (acidic residues); sequence SEDDEVEEDK. Residues 472-492 are disordered; sequence SEDDEVEEDKLESKTENSTLA. An N-linked (GlcNAc...) asparagine glycan is attached at asparagine 488.

This sequence belongs to the major facilitator superfamily. Spinster (TC 2.A.1.49) family.

It localises to the late endosome membrane. The protein localises to the lysosome membrane. In terms of biological role, probable sphingolipid transporter that plays a central role in endosomes and/or lysosomes storage. The protein is Probable sphingolipid transporter spinster homolog 1 of Arabidopsis thaliana (Mouse-ear cress).